A 542-amino-acid polypeptide reads, in one-letter code: Tripartite motif-containing protein 26 (542 aa).

The RING-type zinc finger occupies 16 to 57 (CSICLDYLRDPVTIDCGHVFCRSCTSDIRPISGNRPVCPLCK). Residues 97-138 (QDMKLCERHQEKLHYYCEDDGKLLCVMCRESREHRPHTAVLV) form a B box-type zinc finger. 4 residues coordinate Zn(2+): Cys-102, His-105, Cys-124, and His-130. Residues 197–243 (QFLKKREQHLLDQLATLEQLLTEGREKFKTRGVSELDRLTLVISELE) are a coiled coil. Residues 298 to 542 (RGLRQFQGKL…WPEARLLLRP (245 aa)) enclose the B30.2/SPRY domain. Positions 379-440 (REGWSEDEEE…EEEEEVQESC (62 aa)) are disordered. 2 stretches are compositionally biased toward acidic residues: residues 383–405 (SEDEEEGEEEEEGEEEEEDEEPG) and 413–437 (WETDEEDESLGEEEEEEEEEEEEVQ). Positions 411 to 440 (EDWETDEEDESLGEEEEEEEEEEEEVQESC) form a coiled coil.

It belongs to the TRIM/RBCC family. Interacts with TBK1; this interaction bridges together TBK1 and NEMO in order to activate TBK1. Interacts with INCA1. Autoubiquitinates upon viral infection. In turn, autoubiquitinated TRIM26 recruits NEMO and bridges TBK1-NEMO interaction.

It is found in the cytoplasm. Its subcellular location is the nucleus. It catalyses the reaction S-ubiquitinyl-[E2 ubiquitin-conjugating enzyme]-L-cysteine + [acceptor protein]-L-lysine = [E2 ubiquitin-conjugating enzyme]-L-cysteine + N(6)-ubiquitinyl-[acceptor protein]-L-lysine.. Functionally, E3 ubiquitin-protein ligase which regulates the IFN-beta production and antiviral response downstream of various DNA-encoded pattern-recognition receptors (PRRs). Also plays a central role in determining the response to different forms of oxidative stress by controlling levels of DNA glycosylases NEIL1, NEIL3 and NTH1 that are involved in repair of damaged DNA. Promotes nuclear IRF3 ubiquitination and proteasomal degradation. Bridges together TBK1 and NEMO during the innate response to viral infection leading to the activation of TBK1. Positively regulates LPS-mediated inflammatory innate immune response by catalyzing the 'Lys-11'-linked polyubiquitination of TAB1 to enhance its activation and subsequent NF-kappa-B and MAPK signaling. In a manner independent of its catalytic activity, inhibits WWP2, a SOX2-directed E3 ubiquitin ligase, and thus protects SOX2 from polyubiquitination and proteasomal degradation. Ubiquitinates the histone acetyltransferase protein complex component PHF20 and thereby triggers its degradation in the nucleus after its recruitment by the histone demethylase KDM6B, serving as a scaffold protein. Upon induction by TGF-beta, ubiquitinates the TFIID component TAF7 for proteasomal degradation. Induces ferroptosis by ubiquitinating SLC7A11, a critical protein for lipid reactive oxygen species (ROS) scavenging. This Rattus norvegicus (Rat) protein is Tripartite motif-containing protein 26 (Trim26).